A 522-amino-acid polypeptide reads, in one-letter code: DEAD-box ATP-dependent RNA helicase 1 (522 aa).

A Q motif motif is present at residues 30–59 (CALDTLPCLNPKLKKALENMGISSLFPVQV). Positions 66–297 (IGPGGFERDI…QLDLHHPLFM (232 aa)) constitute a Helicase ATP-binding domain. 79–86 (SPTGSGKT) provides a ligand contact to ATP. Positions 207 to 210 (DETD) match the DEAD box motif. The region spanning 325–475 (YLVALLKSWE…PIPPTSLDSI (151 aa)) is the Helicase C-terminal domain. The segment at 490 to 522 (VESEAPKKGRQAFRHNSRTGNSQTKLNKPRSEA) is disordered. The span at 497–506 (KGRQAFRHNS) shows a compositional bias: basic residues.

It belongs to the DEAD box helicase family. DDX51/DBP6 subfamily.

The catalysed reaction is ATP + H2O = ADP + phosphate + H(+). This is DEAD-box ATP-dependent RNA helicase 1 (RH1) from Arabidopsis thaliana (Mouse-ear cress).